A 433-amino-acid chain; its full sequence is Aspartate--tRNA(Asp/Asn) ligase (433 aa).

Glu-167 is an L-aspartate binding site. The tract at residues Gln-189–Lys-192 is aspartate. Residue Arg-211 participates in L-aspartate binding. Residues Arg-211–Glu-213, Arg-219–Leu-221, and Glu-356 each bind ATP. Mg(2+) is bound by residues Glu-356 and Ser-359. The L-aspartate site is built by Ser-359 and Arg-363. An ATP-binding site is contributed by Gly-404–Arg-407.

This sequence belongs to the class-II aminoacyl-tRNA synthetase family. Type 2 subfamily. Homodimer. Requires Mg(2+) as cofactor.

The protein localises to the cytoplasm. It carries out the reaction tRNA(Asx) + L-aspartate + ATP = L-aspartyl-tRNA(Asx) + AMP + diphosphate. Its function is as follows. Aspartyl-tRNA synthetase with relaxed tRNA specificity since it is able to aspartylate not only its cognate tRNA(Asp) but also tRNA(Asn). Reaction proceeds in two steps: L-aspartate is first activated by ATP to form Asp-AMP and then transferred to the acceptor end of tRNA(Asp/Asn). This Natronomonas pharaonis (strain ATCC 35678 / DSM 2160 / CIP 103997 / JCM 8858 / NBRC 14720 / NCIMB 2260 / Gabara) (Halobacterium pharaonis) protein is Aspartate--tRNA(Asp/Asn) ligase.